A 293-amino-acid chain; its full sequence is Protein phosphatase 1 regulatory subunit 3B (293 aa).

Residues 129–237 (RQRIENDHVC…NNQGKNYRII (109 aa)) enclose the CBM21 domain.

As to quaternary structure, interacts with glycogen, PPP1CC catalytic subunit of PP1 and PYGL. Associates with glycogen particles. Forms complexes with debranching enzyme, glycogen phosphorylase, glycogen synthase and phosphorylase kinase which is necessary for its regulation of PP1 activity.

Its function is as follows. Acts as a glycogen-targeting subunit for phosphatase PP1. Facilitates interaction of the PP1 with enzymes of the glycogen metabolism and regulates its activity. Suppresses the rate at which PP1 dephosphorylates (inactivates) glycogen phosphorylase and enhances the rate at which it activates glycogen synthase and therefore limits glycogen breakdown. The protein is Protein phosphatase 1 regulatory subunit 3B (ppp1r3b) of Danio rerio (Zebrafish).